We begin with the raw amino-acid sequence, 160 residues long: Cytochrome b6-f complex subunit 4 (160 aa).

3 consecutive transmembrane segments (helical) span residues Leu-36–Val-56, Leu-95–Glu-115, and Thr-131–Ile-151.

Belongs to the cytochrome b family. PetD subfamily. In terms of assembly, the 4 large subunits of the cytochrome b6-f complex are cytochrome b6, subunit IV (17 kDa polypeptide, petD), cytochrome f and the Rieske protein, while the 4 small subunits are petG, petL, petM and petN. The complex functions as a dimer.

The protein localises to the plastid. It localises to the chloroplast thylakoid membrane. Its function is as follows. Component of the cytochrome b6-f complex, which mediates electron transfer between photosystem II (PSII) and photosystem I (PSI), cyclic electron flow around PSI, and state transitions. This Amborella trichopoda protein is Cytochrome b6-f complex subunit 4.